The sequence spans 58 residues: UPF0391 membrane protein MADE_1011595 (58 aa).

The next 2 helical transmembrane spans lie at 4 to 24 and 27 to 47; these read WAIT…GGIA and ATGI…ISLI.

The protein belongs to the UPF0391 family.

It is found in the cell membrane. This Alteromonas mediterranea (strain DSM 17117 / CIP 110805 / LMG 28347 / Deep ecotype) protein is UPF0391 membrane protein MADE_1011595.